We begin with the raw amino-acid sequence, 124 residues long: MDIPISTRDFRCLQLACVALGLVAGSIIIGVSVSKAAAAVGGIFLGAAGLGLLIFAYPFLKARFNLDHILPAIGNLRIHPNSGPDHGEGRSSNNSNKEGARSGLSTVTRTLEKLKPGGRGTEEG.

The next 2 helical transmembrane spans lie at Leu-13 to Val-33 and Val-40 to Leu-60. The tract at residues Pro-80–Gly-124 is disordered. Positions Arg-90–Arg-109 are enriched in polar residues. Residues Thr-110–Gly-124 are compositionally biased toward basic and acidic residues.

Preferentially expressed in the inner ear and testis. Localizes mainly in the kinocilium of sensory cells in the inner ear. Also present in the manchette of the spermatids, a transient structure enriched in interconnected microtubules (at protein level).

The protein localises to the membrane. Its function is as follows. May play a role in stabilizing dense microtubular networks or in vesicular trafficking. This chain is Kinocilin (Kncn), found in Mus musculus (Mouse).